Consider the following 398-residue polypeptide: MAGYEYVSPEQLSGFDKYKYSALDTNPLSLYIMHPFWNTIVKVFPTWLAPNLITFSGFMLLVFNFLLLTYFDPDFYASAPGHKHVPDWVWIVVGILNFAAYTLDGVDGKQARRTNSSTPLGELFDHGLDSWSCVYFVVTVYSIFGRGPTGVSVFVLYLLLWVVLFSFILSHWEKYNTGVLFLPWGYDISQVTISFVYIVTAVVGVEAWYEPFLFNFLYRDLFTAMIIGCALCVTLPMSLLNFFRSYKSNTLKHKSVYEAMVPFFSPCLLFTLCTVWILWSPSDILEIHPRIFYFMVGTAFANITCQLIVCQMSSTRCPTLNWLLLPLLLVVAAVIVGAATSRLESALLYTLTAAFTLAHIHYGVQVVKQLSRHFQIYPFSLRKPNSDULGMEEQNIGL.

The residue at position 2 (A2) is an N-acetylalanine. 10 helical membrane passes run 47 to 69 (WLAP…LLLT), 84 to 103 (HVPD…AYTL), 123 to 145 (LFDH…SIFG), 150 to 172 (GVSV…LSHW), 179 to 201 (VLFL…IVTA), 221 to 243 (LFTA…LNFF), 256 to 278 (VYEA…VWIL), 291 to 310 (IFYF…LIVC), 319 to 341 (TLNW…AATS), and 345 to 367 (SALL…VQVV). Residue U388 is a non-standard amino acid, selenocysteine.

The protein belongs to the CDP-alcohol phosphatidyltransferase class-I family. Mg(2+) is required as a cofactor. It depends on Mn(2+) as a cofactor.

The protein resides in the endoplasmic reticulum membrane. It catalyses the reaction CDP-ethanolamine + a 1,2-diacyl-sn-glycerol = a 1,2-diacyl-sn-glycero-3-phosphoethanolamine + CMP + H(+). The enzyme catalyses 1-O-alkyl-2-acyl-sn-glycerol + CDP-ethanolamine = a 1-O-alkyl-2-acyl-sn-glycero-3-phosphoethanolamine + CMP + H(+). Its pathway is phospholipid metabolism; phosphatidylethanolamine biosynthesis; phosphatidylethanolamine from ethanolamine: step 3/3. In terms of biological role, ethanolaminephosphotransferase that catalyzes the transfer of phosphoethanolamine (PE) from CDP-ethanolamine to lipid acceptors, the final step in the synthesis of PE via the 'Kennedy' pathway. PE is the second most abundant phospholipid of membranes in mammals and is involved in various membrane-related cellular processes. The enzyme is critical for the synthesis of several PE species and also catalyzes the synthesis of plasmanyl-PE, a lipid required for proper myelination and neurodevelopment, from 1-alkyl-2-acylglycerol. The chain is Ethanolaminephosphotransferase 1 from Mus musculus (Mouse).